A 474-amino-acid chain; its full sequence is 3-isopropylmalate dehydratase large subunit (474 aa).

[4Fe-4S] cluster-binding residues include cysteine 353, cysteine 414, and cysteine 417.

The protein belongs to the aconitase/IPM isomerase family. LeuC type 1 subfamily. Heterodimer of LeuC and LeuD. Requires [4Fe-4S] cluster as cofactor.

It catalyses the reaction (2R,3S)-3-isopropylmalate = (2S)-2-isopropylmalate. It functions in the pathway amino-acid biosynthesis; L-leucine biosynthesis; L-leucine from 3-methyl-2-oxobutanoate: step 2/4. Its function is as follows. Catalyzes the isomerization between 2-isopropylmalate and 3-isopropylmalate, via the formation of 2-isopropylmaleate. In Xylella fastidiosa (strain 9a5c), this protein is 3-isopropylmalate dehydratase large subunit.